Reading from the N-terminus, the 157-residue chain is Urease accessory protein UreE (157 aa).

This sequence belongs to the UreE family.

It is found in the cytoplasm. In terms of biological role, involved in urease metallocenter assembly. Binds nickel. Probably functions as a nickel donor during metallocenter assembly. This Corynebacterium glutamicum (strain ATCC 13032 / DSM 20300 / JCM 1318 / BCRC 11384 / CCUG 27702 / LMG 3730 / NBRC 12168 / NCIMB 10025 / NRRL B-2784 / 534) protein is Urease accessory protein UreE.